A 164-amino-acid chain; its full sequence is uncharacterized protein (164 aa).

The span at Met1 to Gly29 shows a compositional bias: polar residues. The interval Met1 to Asp62 is disordered. A compositionally biased stretch (low complexity) spans Ser43 to Asp62.

This is an uncharacterized protein from Schizosaccharomyces pombe (strain 972 / ATCC 24843) (Fission yeast).